The chain runs to 214 residues: Large ribosomal subunit protein uL16 (214 aa).

R32 carries the post-translational modification Citrulline. K175 participates in a covalent cross-link: Glycyl lysine isopeptide (Lys-Gly) (interchain with G-Cter in SUMO2). A Glycyl lysine isopeptide (Lys-Gly) (interchain with G-Cter in ubiquitin) cross-link involves residue K188.

It belongs to the universal ribosomal protein uL16 family. In terms of assembly, component of the large ribosomal subunit. Mature ribosomes consist of a small (40S) and a large (60S) subunit. The 40S subunit contains about 33 different proteins and 1 molecule of RNA (18S). The 60S subunit contains about 49 different proteins and 3 molecules of RNA (28S, 5.8S and 5S). Citrullinated by PADI4. Post-translationally, ufmylated by UFL1.

It is found in the cytoplasm. Component of the large ribosomal subunit. Plays a role in the formation of actively translating ribosomes. May play a role in the embryonic brain development. This is Large ribosomal subunit protein uL16 from Pongo abelii (Sumatran orangutan).